Here is a 326-residue protein sequence, read N- to C-terminus: Flap endonuclease 1 (326 aa).

The segment at 1–100 (MGNADLRSLA…DEVEKRREQR (100 aa)) is N-domain. The Mg(2+) site is built by aspartate 28, aspartate 82, glutamate 154, glutamate 156, aspartate 175, aspartate 177, and aspartate 225. Positions 118–246 (RVAKLDSRTQ…TAVKDLHEHG (129 aa)) are I-domain. Residues 318–326 (VQTGLDRWA) form an interaction with PCNA region.

The protein belongs to the XPG/RAD2 endonuclease family. FEN1 subfamily. Interacts with PCNA. PCNA stimulates the nuclease activity without altering cleavage specificity. It depends on Mg(2+) as a cofactor.

Its function is as follows. Structure-specific nuclease with 5'-flap endonuclease and 5'-3' exonuclease activities involved in DNA replication and repair. During DNA replication, cleaves the 5'-overhanging flap structure that is generated by displacement synthesis when DNA polymerase encounters the 5'-end of a downstream Okazaki fragment. Binds the unpaired 3'-DNA end and kinks the DNA to facilitate 5' cleavage specificity. Cleaves one nucleotide into the double-stranded DNA from the junction in flap DNA, leaving a nick for ligation. Also involved in the base excision repair (BER) pathway. Acts as a genome stabilization factor that prevents flaps from equilibrating into structures that lead to duplications and deletions. Also possesses 5'-3' exonuclease activity on nicked or gapped double-stranded DNA. The chain is Flap endonuclease 1 from Haloarcula marismortui (strain ATCC 43049 / DSM 3752 / JCM 8966 / VKM B-1809) (Halobacterium marismortui).